A 145-amino-acid chain; its full sequence is Transcription antitermination protein NusB (145 aa).

The protein belongs to the NusB family.

Its function is as follows. Involved in transcription antitermination. Required for transcription of ribosomal RNA (rRNA) genes. Binds specifically to the boxA antiterminator sequence of the ribosomal RNA (rrn) operons. This Burkholderia mallei (strain NCTC 10247) protein is Transcription antitermination protein NusB.